Here is a 301-residue protein sequence, read N- to C-terminus: 2-(hydroxymethyl)glutarate dehydrogenase (301 aa).

NAD(+)-binding positions include 8–22 (GFIG…MAIN) and Ser-99. Lys-174 is an active-site residue. NAD(+) is bound at residue Lys-243.

The protein belongs to the HIBADH-related family. As to quaternary structure, homotetramer.

It carries out the reaction (S)-2-hydroxymethylglutarate + NAD(+) = 2-formylglutarate + NADH + H(+). It functions in the pathway cofactor degradation; nicotinate degradation; propanoate and pyruvate from 6-hydroxynicotinate: step 3/8. Catalyzes the conversion of 2-formylglutarate to (S)-2-hydroxymethylglutarate. Has very low activity with (S)-3-hydroxyisobutyrate. In Eubacterium barkeri (Clostridium barkeri), this protein is 2-(hydroxymethyl)glutarate dehydrogenase.